Here is a 146-residue protein sequence, read N- to C-terminus: UPF0735 ACT domain-containing protein CHY_1913 (146 aa).

One can recognise an ACT domain in the interval 70 to 145 (TLALNLEHRA…GVSKVELVGQ (76 aa)).

It belongs to the UPF0735 family.

The protein is UPF0735 ACT domain-containing protein CHY_1913 of Carboxydothermus hydrogenoformans (strain ATCC BAA-161 / DSM 6008 / Z-2901).